The primary structure comprises 469 residues: Neuraminidase (469 aa).

The Intravirion portion of the chain corresponds to 1-6 (MNPNQK). Residues 7 to 29 (IITIGSVSLTIATACSLMQIAIL) form a helical membrane-spanning segment. Residues 11–33 (GSVSLTIATACSLMQIAILATTV) are involved in apical transport and lipid raft association. Residues 30-469 (ATTVTLHFKQ…DGANINFMPI (440 aa)) lie on the Virion surface side of the membrane. The segment at 36-88 (HFKQHECDSPASNQVMPCEPIIIERNITEIVYLNNTTIEKEICPEVVEYRNWS) is hypervariable stalk region. Residues N61, N69, N70, and N86 are each glycosylated (N-linked (GlcNAc...) asparagine; by host). Residues 91–469 (QCQITGFAPF…DGANINFMPI (379 aa)) form a head of neuraminidase region. 8 cysteine pairs are disulfide-bonded: C92-C417, C124-C129, C183-C230, C232-C237, C278-C291, C280-C289, C318-C337, and C421-C447. Residue R118 coordinates substrate. Residue N146 is glycosylated (N-linked (GlcNAc...) asparagine; by host). The Proton donor/acceptor role is filled by D151. R152 provides a ligand contact to substrate. Residues N200 and N234 are each glycosylated (N-linked (GlcNAc...) asparagine; by host). 276–277 (EE) is a substrate binding site. Substrate is bound at residue R292. The Ca(2+) site is built by D293, G297, and D324. The tract at residues 325 to 349 (TPRNDDSSSNSNCRDPNNERGNPGV) is disordered. Substrate is bound at residue R371. A glycan (N-linked (GlcNAc...) asparagine; by host) is linked at N402. Y406 acts as the Nucleophile in catalysis.

This sequence belongs to the glycosyl hydrolase 34 family. In terms of assembly, homotetramer. Ca(2+) serves as cofactor. In terms of processing, N-glycosylated.

The protein localises to the virion membrane. It localises to the host apical cell membrane. It catalyses the reaction Hydrolysis of alpha-(2-&gt;3)-, alpha-(2-&gt;6)-, alpha-(2-&gt;8)- glycosidic linkages of terminal sialic acid residues in oligosaccharides, glycoproteins, glycolipids, colominic acid and synthetic substrates.. Its activity is regulated as follows. Inhibited by the neuraminidase inhibitors zanamivir (Relenza) and oseltamivir (Tamiflu). These drugs interfere with the release of progeny virus from infected cells and are effective against all influenza strains. Resistance to neuraminidase inhibitors is quite rare. In terms of biological role, catalyzes the removal of terminal sialic acid residues from viral and cellular glycoconjugates. Cleaves off the terminal sialic acids on the glycosylated HA during virus budding to facilitate virus release. Additionally helps virus spread through the circulation by further removing sialic acids from the cell surface. These cleavages prevent self-aggregation and ensure the efficient spread of the progeny virus from cell to cell. Otherwise, infection would be limited to one round of replication. Described as a receptor-destroying enzyme because it cleaves a terminal sialic acid from the cellular receptors. May facilitate viral invasion of the upper airways by cleaving the sialic acid moieties on the mucin of the airway epithelial cells. Likely to plays a role in the budding process through its association with lipid rafts during intracellular transport. May additionally display a raft-association independent effect on budding. Plays a role in the determination of host range restriction on replication and virulence. Sialidase activity in late endosome/lysosome traffic seems to enhance virus replication. The polypeptide is Neuraminidase (Aves (Human)).